A 1297-amino-acid polypeptide reads, in one-letter code: MPLAFTNPGTPLKRTAAYDNVQWNQNRILTFGTRYTVLIIVNNYESYQNIQFGESIGAVALDQRTGFLAIAHGQVLDIYKPADSLKWTHHYNYITQLSEDITQLSWGYNFDLLLCASSYTKLINFSEDKPRLVWSQNRISDSFLSSTISSDACFIASIETKNPLAKVWQRTSPQGTVSSCDDFSYLVHPCRVRFSQWSKHLHPDASGSTPFLSTVGYDNVLRIWQVGSRFGSQLMHLSCFLNLRKYYKSDQPPYCCFIDKDDFTIALAHAISRHSGQVHKDRILNRLLALASGQPHIFLLFTFECLYIFSLVIDQETLSSFELINQVPTNFPKGALQPDGFIPIYRTSKHEFYDYNIILFFQNSAREYMFSLTDFFYSDFELRVSYDFYGHDYPIKSLTRTSNGHGIVSRDVNRICMFQSYISQDGKNQLICRFRLLLGESDFILPLYAGEYAAVLNLNSLKLWHCNEAIPPTLLCTCRQVPTSPIITFFILPVQNNDNSALCALTEGGHAWFWSVSNEAHDGSAVLRFIDRVNFTKNLNIASAVDVMGWSSTLNLSSLSSFDQEVFQSISKDGLLQTWMARVLGDDKAEISEISKVQTSIKSATMIKGSTSKKVAVVSENNRRLSIFDTRSSEFSEKEEFSSVFDDYGPINDLDWTSTPNSHSILAVGFLHDVILLCQNRRSYMNDIPCWSRIRRYNLLEYTNSLISDSSWLDNGTLVTAIGNGLFYFDNSLPEDQSLLFPASLKRSAKNIFDLAYQLNGILPVFHPQLLQQLLLRNQPFLFTNILLRFYLCLKDDVDMHFLLNMDCSEFYCCDEEISKDLLIKSLSQNSAEILNPAELDFEETSVSKHLGLYIDEMIKKLTALLKVKKVKTLTRSSQFLLLNLIEAFNKARALRDSLDLNGKRYCIMLNQYVLSKHQRQLTSLPTREMAWAFHSSNKAVLLDHTKKLHGKPLLWNAVEEYAIPFWLNEQLLKDVFLELSRNHYAEIDDRNPENVSLYHIALHKINVFRDLWRLASWHKESARTVKLLSNDFSKKKWKVVASKNAFALLSKHRYFYASAFFLLADSCYDAAKVCIRNLKSISLAIAMTRVYEGDDGPTLKRLINEYVLPLAVSQNDRWLTNWSFTILKQEKKALQSLVSPIRSLVSDNDFIQLYTSDKNDQEIHENKDSQRNSTNEPVRNKFPSDDPAFILLYECLRSSNVQIDESLEYRFVLHNANVYCQLGCDLIALGLLRNWKFQKNPATAHLETEDYMVTDKQSAVEKTHDSPKLGKTLMGQDIRPTPDDVPEFNESAFSFE.

Basic and acidic residues-rich tracts occupy residues 1161-1171 (DQEIHENKDSQ) and 1260-1269 (AVEKTHDSPK). Disordered regions lie at residues 1161 to 1182 (DQEI…VRNK) and 1260 to 1297 (AVEK…FSFE).

Component of the RAVE complex composed of rav1, rav2 and skp1. Interacts with vam2.

The protein resides in the cytoplasm. It is found in the nucleus. Its subcellular location is the endomembrane system. Its function is as follows. Component of the RAVE complex which is required for stable assembly of the vacuolar ATPase complex V-ATPase. The protein is Regulator of V-ATPase in vacuolar membrane protein 1 (rav1) of Schizosaccharomyces pombe (strain 972 / ATCC 24843) (Fission yeast).